Consider the following 275-residue polypeptide: Probable 2' cyclic ADP-D-ribose synthase TcpB (275 aa).

The span at 17–32 shows a compositional bias: basic and acidic residues; the sequence is RLKADDSREMSKEKQA. Positions 17-66 are disordered; sequence RLKADDSREMSKEKQAQSKAHKAQQAISSAKSLSTQKSKMSELERATRDG. The span at 39-48 shows a compositional bias: low complexity; that stretch reads AQQAISSAKS. Basic and acidic residues predominate over residues 55–64; it reads KMSELERATR. In terms of domain architecture, TIR spans 142–275; the sequence is EEYDFFISHA…EIAKELHSLI (134 aa). Residues 151–152 and K181 each bind NAD(+); that span reads AS. Residue E217 is part of the active site.

Homodimer. Interacts with host TIRAP, and probably host MYD88. Interacts with host TLR4, abolishes the interaction of host TIRAP with TLR4.

Its subcellular location is the secreted. It localises to the host cell membrane. It carries out the reaction NAD(+) + H2O = ADP-D-ribose + nicotinamide + H(+). It catalyses the reaction NAD(+) = 2'cADPR + nicotinamide + H(+). Its function is as follows. Virulence factor that interferes with host Toll-like receptor 2 (TLR2) and TLR4 signaling, resulting in the reduction of dendritic cell maturation, inhibition of pro-inflammatory cytokine secretion and impaired NF-kappa-B activation in macrophages. Binds host lipids. Has NAD(+) hydrolase (NADase) activity, catalyzes cleavage of NAD(+) into ADP-D-ribose (ADPR) and nicotinamide, also generates a cyclization variant of cyclic ADPR (cADPR), termed v-cADPR (probably 2'cADPR). In Brucella melitensis biotype 2 (strain ATCC 23457), this protein is Probable 2' cyclic ADP-D-ribose synthase TcpB (tcpB).